The sequence spans 311 residues: Glycine--tRNA ligase alpha subunit (311 aa).

The protein belongs to the class-II aminoacyl-tRNA synthetase family. In terms of assembly, tetramer of two alpha and two beta subunits.

The protein resides in the cytoplasm. It carries out the reaction tRNA(Gly) + glycine + ATP = glycyl-tRNA(Gly) + AMP + diphosphate. The chain is Glycine--tRNA ligase alpha subunit from Rhizobium meliloti (strain 1021) (Ensifer meliloti).